Here is a 195-residue protein sequence, read N- to C-terminus: Probable GTP-binding protein EngB (195 aa).

Positions 24-195 (GLKEVALAGR…MIFNAIEKYL (172 aa)) constitute an EngB-type G domain. GTP contacts are provided by residues 32 to 39 (GRSNVGKS), 59 to 63 (GKTQT), 77 to 80 (DVPG), 144 to 147 (TKED), and 176 to 178 (YTA). Residues S39 and T61 each contribute to the Mg(2+) site.

Belongs to the TRAFAC class TrmE-Era-EngA-EngB-Septin-like GTPase superfamily. EngB GTPase family. The cofactor is Mg(2+).

In terms of biological role, necessary for normal cell division and for the maintenance of normal septation. In Macrococcus caseolyticus (strain JCSC5402) (Macrococcoides caseolyticum), this protein is Probable GTP-binding protein EngB.